We begin with the raw amino-acid sequence, 82 residues long: Cytochrome b559 subunit alpha (82 aa).

The chain crosses the membrane as a helical span at residues 22–36 (VIHAITLPSIFLAGF). Residue H24 coordinates heme.

Belongs to the PsbE/PsbF family. As to quaternary structure, heterodimer of an alpha subunit and a beta subunit. PSII is composed of 1 copy each of membrane proteins PsbA, PsbB, PsbC, PsbD, PsbE, PsbF, PsbH, PsbI, PsbJ, PsbK, PsbL, PsbM, PsbT, PsbX, PsbY, PsbZ, Psb30/Ycf12, peripheral proteins PsbO, CyanoQ (PsbQ), PsbU, PsbV and a large number of cofactors. It forms dimeric complexes. The cofactor is heme b.

It localises to the cellular thylakoid membrane. This b-type cytochrome is tightly associated with the reaction center of photosystem II (PSII). PSII is a light-driven water:plastoquinone oxidoreductase that uses light energy to abstract electrons from H(2)O, generating O(2) and a proton gradient subsequently used for ATP formation. It consists of a core antenna complex that captures photons, and an electron transfer chain that converts photonic excitation into a charge separation. This chain is Cytochrome b559 subunit alpha, found in Synechococcus sp. (strain WH7803).